Reading from the N-terminus, the 1224-residue chain is uncharacterized protein (1224 aa).

6 disordered regions span residues 1-67, 111-151, 193-270, 316-416, 430-957, and 1078-1167; these read MNQD…SSSI, QQSH…PPPL, QTEL…DPNI, DYNN…TVKK, SDSG…QEEK, and SFLP…TSHV. Positions 10 to 48 are enriched in low complexity; that stretch reads SFHSNNNSNSNHHHSYNNSINSGSSSSGSNNSSNNNSFN. A compositionally biased stretch (acidic residues) spans 49–58; that stretch reads DEIEGGEIQE. Composition is skewed to low complexity over residues 126-140, 193-212, and 228-241; these read SSSS…SSSS, QTEL…SSPP, and SAPT…SVSS. Residues 242–255 are compositionally biased toward polar residues; it reads LTQPQKPKSVQYSQ. Residues 260-270 show a composition bias toward basic and acidic residues; it reads EIREEKVDPNI. Low complexity predominate over residues 316 to 338; the sequence is DYNNSNSNNSNNNNNNNNSITEN. The span at 341–353 shows a compositional bias: polar residues; it reads DKMINNQPSSTNS. Low complexity-rich tracts occupy residues 379-413 and 430-450; these read TTTT…TTPT and SDSG…TSTP. 2 stretches are compositionally biased toward basic and acidic residues: residues 451 to 585 and 630 to 646; these read KSKD…DKKK and EIDK…KVES. The segment covering 662–719 has biased composition (low complexity); it reads TTTTTTSTSSSSSLPSLSSSSSSLPLPSSSSSSSSSSSSSSSSSSSSSSSSSSSTTST. Over residues 727–750 the composition is skewed to pro residues; sequence PPPPPQQPPPPPPQQPPPPPPPIN. A compositionally biased stretch (basic and acidic residues) spans 755–892; it reads SEHDKKIIEK…SDRDRDRKDS (138 aa). Low complexity predominate over residues 893–933; it reads NSNNNSNNNNNNNNNNNNNNNNNNNNKKDNNNNNNNNNNNN. The span at 948-957 shows a compositional bias: basic and acidic residues; that stretch reads TPKKTKQEEK. The stretch at 950–991 forms a coiled coil; it reads KKTKQEEKLIRSQIDQIKEDAKDLKKLAKELQSKNQNECLEM. Low complexity-rich tracts occupy residues 1078–1108 and 1114–1165; these read SFLP…TAPL and NPSE…PNTS.

This is an uncharacterized protein from Dictyostelium discoideum (Social amoeba).